Consider the following 566-residue polypeptide: Glutamate--tRNA ligase (566 aa).

Positions 93-103 match the 'HIGH' region motif; sequence PNPDYTIHLGN.

The protein belongs to the class-I aminoacyl-tRNA synthetase family. Glutamate--tRNA ligase type 2 subfamily.

It is found in the cytoplasm. The catalysed reaction is tRNA(Glu) + L-glutamate + ATP = L-glutamyl-tRNA(Glu) + AMP + diphosphate. Catalyzes the attachment of glutamate to tRNA(Glu) in a two-step reaction: glutamate is first activated by ATP to form Glu-AMP and then transferred to the acceptor end of tRNA(Glu). The protein is Glutamate--tRNA ligase of Staphylothermus marinus (strain ATCC 43588 / DSM 3639 / JCM 9404 / F1).